Reading from the N-terminus, the 343-residue chain is Inositol 2-dehydrogenase (343 aa).

Belongs to the Gfo/Idh/MocA family. Homotetramer.

It carries out the reaction myo-inositol + NAD(+) = scyllo-inosose + NADH + H(+). In terms of biological role, involved in the oxidation of myo-inositol (MI) to 2-keto-myo-inositol (2KMI or 2-inosose). The sequence is that of Inositol 2-dehydrogenase from Streptomyces avermitilis (strain ATCC 31267 / DSM 46492 / JCM 5070 / NBRC 14893 / NCIMB 12804 / NRRL 8165 / MA-4680).